Consider the following 67-residue polypeptide: ATP synthase F(0) complex subunit 8 (67 aa).

A helical transmembrane segment spans residues 8–24 (TWFTTILSTSFSIIHRL). K54 carries the post-translational modification N6-acetyllysine; alternate. K54 bears the N6-succinyllysine; alternate mark. The residue at position 57 (K57) is an N6-acetyllysine.

It belongs to the ATPase protein 8 family. As to quaternary structure, component of the ATP synthase complex composed at least of ATP5F1A/subunit alpha, ATP5F1B/subunit beta, ATP5MC1/subunit c (homooctomer), MT-ATP6/subunit a, MT-ATP8/subunit 8, ATP5ME/subunit e, ATP5MF/subunit f, ATP5MG/subunit g, ATP5MK/subunit k, ATP5MJ/subunit j, ATP5F1C/subunit gamma, ATP5F1D/subunit delta, ATP5F1E/subunit epsilon, ATP5PF/subunit F6, ATP5PB/subunit b, ATP5PD/subunit d, ATP5PO/subunit OSCP. ATP synthase complex consists of a soluble F(1) head domain (subunits alpha(3) and beta(3)) - the catalytic core - and a membrane F(0) domain - the membrane proton channel (subunits c, a, 8, e, f, g, k and j). These two domains are linked by a central stalk (subunits gamma, delta, and epsilon) rotating inside the F1 region and a stationary peripheral stalk (subunits F6, b, d, and OSCP). Interacts with PRICKLE3.

It localises to the mitochondrion membrane. In terms of biological role, subunit 8, of the mitochondrial membrane ATP synthase complex (F(1)F(0) ATP synthase or Complex V) that produces ATP from ADP in the presence of a proton gradient across the membrane which is generated by electron transport complexes of the respiratory chain. ATP synthase complex consist of a soluble F(1) head domain - the catalytic core - and a membrane F(1) domain - the membrane proton channel. These two domains are linked by a central stalk rotating inside the F(1) region and a stationary peripheral stalk. During catalysis, ATP synthesis in the catalytic domain of F(1) is coupled via a rotary mechanism of the central stalk subunits to proton translocation. In vivo, can only synthesize ATP although its ATP hydrolase activity can be activated artificially in vitro. Part of the complex F(0) domain. This chain is ATP synthase F(0) complex subunit 8, found in Glis glis (Fat dormouse).